Consider the following 557-residue polypeptide: 6-phosphofructo-2-kinase/fructose-2,6-bisphosphatase 2 (557 aa).

The segment covering 1 to 16 (MSENSTFSTEDSSSSS) has biased composition (low complexity). A disordered region spans residues 1-21 (MSENSTFSTEDSSSSSYKPHA). Position 2 is an N-acetylserine (Ser2). The interval 2 to 251 (SENSTFSTED…VYYLMNIHVH (250 aa)) is 6-phosphofructo-2-kinase. Ser32 is subject to Phosphoserine; by PKA. 48–56 (GLPARGKTY) is an ATP binding site. Beta-D-fructose 6-phosphate contacts are provided by Arg81 and Arg105. Asp131 is an active-site residue. Residues Thr133 and Arg139 each coordinate beta-D-fructose 6-phosphate. The active site involves Cys161. Position 170-175 (170-175 (NILEVK)) interacts with ATP. Beta-D-fructose 6-phosphate contacts are provided by Lys175, Arg196, and Tyr200. Residues 252–557 (PRTIYLCRHG…PSMASLTLLS (306 aa)) are fructose-2,6-bisphosphatase. Arg259 provides a ligand contact to beta-D-fructose 2,6-bisphosphate. His260 (tele-phosphohistidine intermediate) is an active-site residue. Beta-D-fructose 2,6-bisphosphate contacts are provided by Asn266 and Gly272. Catalysis depends on Glu329, which acts as the Proton donor/acceptor. Positions 340, 354, 358, 369, 395, and 399 each coordinate beta-D-fructose 2,6-bisphosphate. 351–354 (FALR) contacts ATP. ATP contacts are provided by residues 395–399 (QAVMR) and Tyr431. Positions 449–495 (RDKPTHNFPKSQTPVRMRRNSFTPLSSSNTIRRPRNYSVGSRPLKPL) are disordered. Residues 456–479 (FPKSQTPVRMRRNSFTPLSSSNTI) show a composition bias toward polar residues. The residue at position 469 (Ser469) is a Phosphoserine. Thr471 is subject to Phosphothreonine. Position 478 is a phosphothreonine; by PKC (Thr478). Phosphoserine is present on residues Ser486 and Ser496.

It in the C-terminal section; belongs to the phosphoglycerate mutase family. Homodimer. Forms a heterodimer with PFKFB3. Post-translationally, phosphorylation by AMPK stimulates activity.

It catalyses the reaction beta-D-fructose 2,6-bisphosphate + H2O = beta-D-fructose 6-phosphate + phosphate. It carries out the reaction beta-D-fructose 6-phosphate + ATP = beta-D-fructose 2,6-bisphosphate + ADP + H(+). Phosphorylation results in the activation of the kinase activity. Synthesis and degradation of fructose 2,6-bisphosphate. In Rattus norvegicus (Rat), this protein is 6-phosphofructo-2-kinase/fructose-2,6-bisphosphatase 2 (Pfkfb2).